We begin with the raw amino-acid sequence, 713 residues long: U3 small nucleolar RNA-associated protein 8 (713 aa).

At Thr95 the chain carries Phosphothreonine. Ser148 and Ser150 each carry phosphoserine.

In terms of assembly, interacts with snoRNA U3. Interacts with MPP10 and UTP25. Component of the ribosomal small subunit (SSU) processome composed of at least 40 protein subunits and snoRNA U3. In the absence of snoRNA3, forms a complex with other t-UTPs. This complex can associate with pre-18S ribosomal RNAs.

The protein localises to the nucleus. The protein resides in the nucleolus. Functionally, involved in nucleolar processing of pre-18S ribosomal RNA. Also has a role in nuclear tRNA export. It acts between the steps of tRNA maturation/aminoacylation and its subsequent translocation out of the nucleus. Required for optimal pre-ribosomal RNA transcription by RNA polymerase I together with a subset of U3 proteins required for transcription (t-UTPs). The protein is U3 small nucleolar RNA-associated protein 8 (UTP8) of Saccharomyces cerevisiae (strain ATCC 204508 / S288c) (Baker's yeast).